A 349-amino-acid polypeptide reads, in one-letter code: Protein-glutamate methylesterase/protein-glutamine glutaminase (349 aa).

Residues 5 to 122 (RVLSVDDSAL…REGMLAYSEM (118 aa)) form the Response regulatory domain. Position 56 is a 4-aspartylphosphate (Asp-56). A CheB-type methylesterase domain is found at 152-344 (LLSSEKLIAI…QQMLAKISAG (193 aa)). Residues Ser-164, His-190, and Asp-286 contribute to the active site.

It belongs to the CheB family. Phosphorylated by CheA. Phosphorylation of the N-terminal regulatory domain activates the methylesterase activity.

It is found in the cytoplasm. It carries out the reaction [protein]-L-glutamate 5-O-methyl ester + H2O = L-glutamyl-[protein] + methanol + H(+). It catalyses the reaction L-glutaminyl-[protein] + H2O = L-glutamyl-[protein] + NH4(+). Functionally, involved in chemotaxis. Part of a chemotaxis signal transduction system that modulates chemotaxis in response to various stimuli. Catalyzes the demethylation of specific methylglutamate residues introduced into the chemoreceptors (methyl-accepting chemotaxis proteins or MCP) by CheR. Also mediates the irreversible deamidation of specific glutamine residues to glutamic acid. The polypeptide is Protein-glutamate methylesterase/protein-glutamine glutaminase (Salmonella paratyphi A (strain ATCC 9150 / SARB42)).